Reading from the N-terminus, the 466-residue chain is Metaxin-1 (466 aa).

Positions 1 to 19 are enriched in low complexity; sequence MLLGGPPRSPRSGTSPKGP. Residues 1–133 are disordered; that stretch reads MLLGGPPRSP…AVAGGGPRQG (133 aa). The span at 20 to 36 shows a compositional bias: polar residues; sequence WSSTGHVQFGKSPQTWP. Low complexity predominate over residues 90–110; the sequence is ARGPVPRSSAASRARRSLASP. Glycyl lysine isopeptide (Lys-Gly) (interchain with G-Cter in ubiquitin) cross-links involve residues K187, K190, K227, and K317. A helical membrane pass occupies residues 421 to 441; the sequence is ILSVLAGLAAMVGYALLSGIV.

Belongs to the metaxin family. In terms of assembly, interacts with MTX2/metaxin-2. Associates with the mitochondrial contact site and cristae organizing system (MICOS) complex, composed of at least MICOS10/MIC10, CHCHD3/MIC19, CHCHD6/MIC25, APOOL/MIC27, IMMT/MIC60, APOO/MIC23/MIC26 and QIL1/MIC13. This complex was also known under the names MINOS or MitOS complex. The MICOS complex associates with mitochondrial outer membrane proteins SAMM50, MTX1 and MTX2 (together described as components of the mitochondrial outer membrane sorting assembly machinery (SAM) complex) and DNAJC11, mitochondrial inner membrane protein TMEM11 and with HSPA9. The MICOS and SAM complexes together with DNAJC11 are part of a large protein complex spanning both membranes termed the mitochondrial intermembrane space bridging (MIB) complex. Interacts with ARMC1. In terms of processing, ubiquitinated by PRKN during mitophagy, leading to its degradation and enhancement of mitophagy. Deubiquitinated by USP30.

The protein resides in the membrane. It localises to the mitochondrion outer membrane. Its function is as follows. Involved in transport of proteins into the mitochondrion. Essential for embryonic development. This chain is Metaxin-1 (MTX1), found in Homo sapiens (Human).